An 85-amino-acid chain; its full sequence is Small proline-rich protein 2D (85 aa).

The segment covering 1–11 has biased composition (low complexity); it reads MSYQQQQCKQP. The disordered stretch occupies residues 1–20; it reads MSYQQQQCKQPCQPPPVCPP. 4 consecutive repeat copies span residues 21 to 29, 30 to 38, 39 to 47, and 48 to 56. The segment at 21–56 is 4 X 9 AA approximate tandem repeats; the sequence is KKCPEPCPPLKCPEPCPPPKCPEPCPPPKCPEPCPE. The tract at residues 57–85 is disordered; sequence PCPPPSCQQKCPPAQPPPPCQQKCPPKSK.

It belongs to the cornifin (SPRR) family. As to expression, expressed in uterus.

It is found in the cytoplasm. Cross-linked envelope protein of keratinocytes. It is a keratinocyte protein that first appears in the cell cytosol, but ultimately becomes cross-linked to membrane proteins by transglutaminase. All that results in the formation of an insoluble envelope beneath the plasma membrane. This is Small proline-rich protein 2D (Sprr2d) from Mus musculus (Mouse).